We begin with the raw amino-acid sequence, 60 residues long: Protein AC4 (60 aa).

This sequence belongs to the geminiviridae protein AC4/C4 family.

Pathogenicity determinant. May act as a suppressor of RNA-mediated gene silencing, also known as post-transcriptional gene silencing (PTGS), a mechanism of plant viral defense that limits the accumulation of viral RNAs. This chain is Protein AC4, found in Pepper huasteco yellow vein virus (PHYVV).